The following is a 305-amino-acid chain: Serine/threonine-protein phosphatase ppe1 (305 aa).

Residues aspartate 51, histidine 53, aspartate 79, and asparagine 111 each coordinate Mn(2+). Histidine 112 acts as the Proton donor in catalysis. 2 residues coordinate Mn(2+): histidine 161 and histidine 235.

This sequence belongs to the PPP phosphatase family. PP-6 (PP-V) subfamily. As to quaternary structure, interacts with sts5, ekc1 and mis12. It depends on Mn(2+) as a cofactor.

It localises to the nucleus. The catalysed reaction is O-phospho-L-seryl-[protein] + H2O = L-seryl-[protein] + phosphate. The enzyme catalyses O-phospho-L-threonyl-[protein] + H2O = L-threonyl-[protein] + phosphate. Its function is as follows. Has a role in chromosome segregation. May provide a dynamic connection between kinetochore microtubules and kinetochore chromatin. Negatively regulates mis12. This Schizosaccharomyces pombe (strain 972 / ATCC 24843) (Fission yeast) protein is Serine/threonine-protein phosphatase ppe1 (ppe1).